Here is a 254-residue protein sequence, read N- to C-terminus: Imidazole glycerol phosphate synthase subunit HisF (254 aa).

Catalysis depends on residues Asp-11 and Asp-130.

This sequence belongs to the HisA/HisF family. In terms of assembly, heterodimer of HisH and HisF.

It localises to the cytoplasm. The enzyme catalyses 5-[(5-phospho-1-deoxy-D-ribulos-1-ylimino)methylamino]-1-(5-phospho-beta-D-ribosyl)imidazole-4-carboxamide + L-glutamine = D-erythro-1-(imidazol-4-yl)glycerol 3-phosphate + 5-amino-1-(5-phospho-beta-D-ribosyl)imidazole-4-carboxamide + L-glutamate + H(+). The protein operates within amino-acid biosynthesis; L-histidine biosynthesis; L-histidine from 5-phospho-alpha-D-ribose 1-diphosphate: step 5/9. IGPS catalyzes the conversion of PRFAR and glutamine to IGP, AICAR and glutamate. The HisF subunit catalyzes the cyclization activity that produces IGP and AICAR from PRFAR using the ammonia provided by the HisH subunit. This chain is Imidazole glycerol phosphate synthase subunit HisF, found in Microcystis aeruginosa (strain NIES-843 / IAM M-2473).